An 874-amino-acid chain; its full sequence is Eukaryotic translation initiation factor 3 subunit C (874 aa).

Residues 1-70 (MSRFFVSGYT…DGRPSGPAYF (70 aa)) form a disordered region. Positions 14–61 (SSEEEDLLSTSEEELLSSSDEGEDNESDSSFFGEDDDESEESSSDDED) are enriched in acidic residues. The region spanning 598–774 (FHQHINLELL…KFISFTSTTE (177 aa)) is the PCI domain. Residues 797–874 (KNEKTQSNGY…SNNDEFQATA (78 aa)) form a disordered region. The segment covering 813–848 (KDQQNQQQQNQNQNQQQQQNQQQQQQQQSSQQQSNN) has biased composition (low complexity). Over residues 862–874 (NVNSNNDEFQATA) the composition is skewed to polar residues.

It belongs to the eIF-3 subunit C family. In terms of assembly, component of the eukaryotic translation initiation factor 3 (eIF-3) complex.

The protein resides in the cytoplasm. Its function is as follows. Component of the eukaryotic translation initiation factor 3 (eIF-3) complex, which is involved in protein synthesis of a specialized repertoire of mRNAs and, together with other initiation factors, stimulates binding of mRNA and methionyl-tRNAi to the 40S ribosome. The eIF-3 complex specifically targets and initiates translation of a subset of mRNAs involved in cell proliferation. This Candida albicans (strain SC5314 / ATCC MYA-2876) (Yeast) protein is Eukaryotic translation initiation factor 3 subunit C.